The sequence spans 149 residues: Large ribosomal subunit protein bL9 (149 aa).

The protein belongs to the bacterial ribosomal protein bL9 family.

Its function is as follows. Binds to the 23S rRNA. In Actinobacillus succinogenes (strain ATCC 55618 / DSM 22257 / CCUG 43843 / 130Z), this protein is Large ribosomal subunit protein bL9.